Here is a 329-residue protein sequence, read N- to C-terminus: Sex comb on midleg-like protein 1 (329 aa).

A phosphoserine mark is found at Ser-138 and Ser-238. Residues 138 to 157 (SPTLPVSRRENNSPSNLPRP) are disordered. The 68-residue stretch at 258–325 (WSVEAVVLFL…YYIDRLKQGK (68 aa)) folds into the SAM domain.

It belongs to the SCM family.

Its subcellular location is the nucleus. Putative Polycomb group (PcG) protein. PcG proteins act by forming multiprotein complexes, which are required to maintain the transcriptionally repressive state of homeotic genes throughout development. May be involved in spermatogenesis during sexual maturation. This chain is Sex comb on midleg-like protein 1 (SCML1), found in Gorilla gorilla gorilla (Western lowland gorilla).